The chain runs to 265 residues: Glutamate racemase (265 aa).

Residues 12–13 (DS) and 44–45 (YG) each bind substrate. Residue C75 is the Proton donor/acceptor of the active site. Substrate is bound at residue 76 to 77 (NT). Catalysis depends on C186, which acts as the Proton donor/acceptor. Substrate is bound at residue 187-188 (TH).

It belongs to the aspartate/glutamate racemases family.

It carries out the reaction L-glutamate = D-glutamate. It participates in cell wall biogenesis; peptidoglycan biosynthesis. Its function is as follows. Provides the (R)-glutamate required for cell wall biosynthesis. In Pseudomonas paraeruginosa (strain DSM 24068 / PA7) (Pseudomonas aeruginosa (strain PA7)), this protein is Glutamate racemase.